The primary structure comprises 198 residues: NAD(P)H dehydrogenase (quinone) (198 aa).

The region spanning isoleucine 4 to valine 190 is the Flavodoxin-like domain. Residues serine 10–isoleucine 15 and threonine 79–phenylalanine 81 each bind FMN. Position 12 (tyrosine 12) interacts with NAD(+). Tryptophan 99 provides a ligand contact to substrate. Residues serine 114 to glycine 119 and histidine 134 each bind FMN.

This sequence belongs to the WrbA family. The cofactor is FMN.

The catalysed reaction is a quinone + NADH + H(+) = a quinol + NAD(+). It carries out the reaction a quinone + NADPH + H(+) = a quinol + NADP(+). This Azotobacter vinelandii (strain DJ / ATCC BAA-1303) protein is NAD(P)H dehydrogenase (quinone).